A 697-amino-acid chain; its full sequence is Elongation factor G 2 (697 aa).

The tr-type G domain maps to 6–281 (TNYRNFGIFA…AVVDFLPNPT (276 aa)). GTP is bound by residues 15-22 (AHVDAGKT), 79-83 (DTPGH), and 133-136 (NKLD).

The protein belongs to the TRAFAC class translation factor GTPase superfamily. Classic translation factor GTPase family. EF-G/EF-2 subfamily.

The protein resides in the cytoplasm. Functionally, catalyzes the GTP-dependent ribosomal translocation step during translation elongation. During this step, the ribosome changes from the pre-translocational (PRE) to the post-translocational (POST) state as the newly formed A-site-bound peptidyl-tRNA and P-site-bound deacylated tRNA move to the P and E sites, respectively. Catalyzes the coordinated movement of the two tRNA molecules, the mRNA and conformational changes in the ribosome. This is Elongation factor G 2 from Trichodesmium erythraeum (strain IMS101).